A 179-amino-acid chain; its full sequence is Plasmid-derived single-stranded DNA-binding protein (179 aa).

Residues 6–110 (INKVILVGRL…ILVKTTGTMQ (105 aa)) enclose the SSB domain. A DNA-binding region spans residues 55-61 (WHRVVLF). A disordered region spans residues 117–179 (GAQTQPEEGQ…DYGFSDDIPF (63 aa)). Residues 118-132 (AQTQPEEGQQFSGQP) show a composition bias toward polar residues. Residues 145–155 (GGAKTKGRGRK) are compositionally biased toward basic residues. Acidic residues predominate over residues 167-179 (EGDDYGFSDDIPF).

As to quaternary structure, homotetramer.

Its function is as follows. May contribute to the conjugative processing of DNA. It has a functional relationship with Psi (plasmid-mediated sos inhibition) proteins. This chain is Plasmid-derived single-stranded DNA-binding protein (ssbF), found in Escherichia coli (strain K12).